Consider the following 513-residue polypeptide: Na(+)/H(+) antiporter NhaB (513 aa).

11 helical membrane-spanning segments follow: residues 21–41 (LCIITFLVINPLIYFFVSPFI), 43–63 (GWTLVAEFIFTLSMALKCYPL), 88–108 (IIANFEVILLLMFMVAGIYFM), 137–157 (AAFLSAFLDALTVIAVIISVG), 202–222 (LLMHAAVGSALGGVMTMVGEP), 235–255 (FIEFLIRVAPVSLPVLICGIA), 299–318 (MAIQALAGIWLIVGLALHLA), 322–344 (IIGLTIIIICTAFCGITDEHAIG), 350–370 (PMPFTALIVVFFTIVAVIVDL), 389–409 (LALFYVFNGLLSMISDNVFVG), and 477–497 (MALPYTIVLSIVGFFALEYLL).

Belongs to the NhaB Na(+)/H(+) (TC 2.A.34) antiporter family.

Its subcellular location is the cell inner membrane. It catalyses the reaction 2 Na(+)(in) + 3 H(+)(out) = 2 Na(+)(out) + 3 H(+)(in). Functionally, na(+)/H(+) antiporter that extrudes sodium in exchange for external protons. In Haemophilus ducreyi (strain 35000HP / ATCC 700724), this protein is Na(+)/H(+) antiporter NhaB.